Reading from the N-terminus, the 293-residue chain is Protease HtpX (293 aa).

The next 2 membrane-spanning stretches (helical) occupy residues 4–24 and 32–52; these read IALF…ILSL and VMGL…VSLL. His-139 provides a ligand contact to Zn(2+). Glu-140 is a catalytic residue. His-143 is a Zn(2+) binding site. Helical transmembrane passes span 158 to 178 and 193 to 213; these read IVNT…AGFM and MVYF…ASTI. Position 222 (Glu-222) interacts with Zn(2+).

This sequence belongs to the peptidase M48B family. Zn(2+) is required as a cofactor.

The protein localises to the cell inner membrane. The chain is Protease HtpX from Erwinia tasmaniensis (strain DSM 17950 / CFBP 7177 / CIP 109463 / NCPPB 4357 / Et1/99).